The primary structure comprises 273 residues: MSLQNIIETAFENRADITPTTVTPEVKEAVLETIRQLDSGKLRVAERLGVGEWKVNEWAKKAVLLSFRIQDNEVLNDGVNKYFDKVPTKFADWSEDEFKNAGFRAVPGAVARRGSFVAKNVVLMPSYVNIGAYVDEGAMVDTWATVGSCAQIGKNVHLSGGVGIGGVLEPLQASPTIIEDNCFIGARSEIVEGVIVEEGSVISMGVFIGQSTKIFDRTTGEIYQGRVPAGSVVVSGSMPSKDGSHSLYCAVIVKRVDAQTRAKTSVNELLRGI.

Substrate is bound by residues arginine 104 and aspartate 141.

Belongs to the transferase hexapeptide repeat family. As to quaternary structure, homotrimer.

It is found in the cytoplasm. The enzyme catalyses (S)-2,3,4,5-tetrahydrodipicolinate + succinyl-CoA + H2O = (S)-2-succinylamino-6-oxoheptanedioate + CoA. It functions in the pathway amino-acid biosynthesis; L-lysine biosynthesis via DAP pathway; LL-2,6-diaminopimelate from (S)-tetrahydrodipicolinate (succinylase route): step 1/3. This Neisseria meningitidis serogroup A / serotype 4A (strain DSM 15465 / Z2491) protein is 2,3,4,5-tetrahydropyridine-2,6-dicarboxylate N-succinyltransferase.